Consider the following 306-residue polypeptide: Flavin adenine dinucleotide synthase (306 aa).

FAD contacts are provided by residues Ser-59, Ile-107, Gly-164, 182-185 (DSNW), Arg-190, and Arg-300.

Belongs to the PAPS reductase family. FAD1 subfamily.

The protein localises to the cytoplasm. The catalysed reaction is FMN + ATP + H(+) = FAD + diphosphate. It participates in cofactor biosynthesis; FAD biosynthesis; FAD from FMN: step 1/1. Functionally, catalyzes the adenylation of flavin mononucleotide (FMN) to form flavin adenine dinucleotide (FAD) coenzyme. The chain is Flavin adenine dinucleotide synthase from Saccharomyces cerevisiae (strain ATCC 204508 / S288c) (Baker's yeast).